Reading from the N-terminus, the 301-residue chain is Phosphatidylglycerol--prolipoprotein diacylglyceryl transferase (301 aa).

The next 3 helical transmembrane spans lie at L17 to G37, M59 to Y79, and G97 to Y117. An a 1,2-diacyl-sn-glycero-3-phospho-(1'-sn-glycerol)-binding site is contributed by R142. The next 2 membrane-spanning stretches (helical) occupy residues M230–F250 and L265–W285.

It belongs to the Lgt family.

It is found in the cell inner membrane. It carries out the reaction L-cysteinyl-[prolipoprotein] + a 1,2-diacyl-sn-glycero-3-phospho-(1'-sn-glycerol) = an S-1,2-diacyl-sn-glyceryl-L-cysteinyl-[prolipoprotein] + sn-glycerol 1-phosphate + H(+). It functions in the pathway protein modification; lipoprotein biosynthesis (diacylglyceryl transfer). Functionally, catalyzes the transfer of the diacylglyceryl group from phosphatidylglycerol to the sulfhydryl group of the N-terminal cysteine of a prolipoprotein, the first step in the formation of mature lipoproteins. In Paraburkholderia phytofirmans (strain DSM 17436 / LMG 22146 / PsJN) (Burkholderia phytofirmans), this protein is Phosphatidylglycerol--prolipoprotein diacylglyceryl transferase.